A 118-amino-acid chain; its full sequence is Large ribosomal subunit protein bL20 (118 aa).

This sequence belongs to the bacterial ribosomal protein bL20 family.

Binds directly to 23S ribosomal RNA and is necessary for the in vitro assembly process of the 50S ribosomal subunit. It is not involved in the protein synthesizing functions of that subunit. The chain is Large ribosomal subunit protein bL20 from Ralstonia pickettii (strain 12J).